The primary structure comprises 128 residues: Protein FAM229A (128 aa).

The interval 1–96 is disordered; sequence MQSSPSTLGP…VATDQNPVRP (96 aa).

This sequence belongs to the FAM229 family.

The chain is Protein FAM229A (Fam229a) from Mus musculus (Mouse).